Consider the following 468-residue polypeptide: Mitochondrial dynamics protein MID51 (468 aa).

At M1–K29 the chain is on the mitochondrial intermembrane side. The helical transmembrane segment at L30–V47 threads the bilayer. Residues K48–V468 lie on the Cytoplasmic side of the membrane. Residues M50–Q196 are dimerization. The tract at residues S56–A123 is disordered. The segment covering Q91–K108 has biased composition (polar residues). The tract at residues A161 to R170 is important for interaction with DNM1L. 3 residues coordinate ADP: S188, S190, and H202. The interval R235 to R244 is important for interaction with DNM1L. ADP-binding residues include S344, R346, and K372.

Belongs to the MID49/MID51 family. Homodimer.

It is found in the mitochondrion outer membrane. Mitochondrial outer membrane protein which regulates mitochondrial fission/fusion dynamics. Promotes the recruitment and association of the fission mediator dynamin-related protein 1 (DNM1L) to the mitochondrial surface independently of the mitochondrial fission FIS1 and MFF proteins. Regulates DNM1L GTPase activity and DNM1L oligomerization. This Danio rerio (Zebrafish) protein is Mitochondrial dynamics protein MID51 (mief1).